The following is a 130-amino-acid chain: U-scoloptoxin(16)-Er4a (130 aa).

A signal peptide spans 1-26 (MNTVSVVQFLAVGCAVFVLYGRGVFA).

It belongs to the scoloptoxin-16 family. Post-translationally, contains 3 disulfide bonds. As to expression, expressed by the venom gland.

The protein localises to the secreted. This Ethmostigmus rubripes (Giant centipede) protein is U-scoloptoxin(16)-Er4a.